Reading from the N-terminus, the 569-residue chain is 4-hydroxy-7-methoxy-3-oxo-3,4-dihydro-2H-1,4-benzoxazin-2-yl glucoside beta-D-glucosidase 1b, chloroplastic (569 aa).

Residues 1-50 (MALLAAATLNPTTHLSLRSRAGRNSENLWLRSTASSQKSKGRFCNLTIRA) constitute a chloroplast transit peptide. A beta-D-glucoside is bound by residues Q92, H194, and 239-240 (NE). The active-site Proton donor is the E240. C259 and C265 are disulfide-bonded. Residues Y383, E456, W504, 511-512 (EW), and F520 each bind a beta-D-glucoside. The active-site Nucleophile is E456.

This sequence belongs to the glycosyl hydrolase 1 family. As to quaternary structure, homo- and heterohexamers. As to expression, expressed in young seedlings early after germination.

It is found in the plastid. It localises to the chloroplast. It carries out the reaction Hydrolysis of terminal, non-reducing beta-D-glucosyl residues with release of beta-D-glucose.. The enzyme catalyses DIMBOA beta-D-glucoside + H2O = DIMBOA + D-glucose. The catalysed reaction is DIBOA beta-D-glucoside + H2O = DIBOA + D-glucose. Acts in defense of young plant parts against pests via the production of hydroxamic acids from hydroxamic acid glucosides. Enzymatic activity is highly correlated with plant growth. The preferred substrate is DIMBOA-beta-D-glucoside. This chain is 4-hydroxy-7-methoxy-3-oxo-3,4-dihydro-2H-1,4-benzoxazin-2-yl glucoside beta-D-glucosidase 1b, chloroplastic (GLU1B), found in Triticum aestivum (Wheat).